The following is a 105-amino-acid chain: NADH dehydrogenase [ubiquinone] 1 beta subcomplex subunit 2, mitochondrial (105 aa).

The N-terminal 33 residues, Met1–His33, are a transit peptide targeting the mitochondrion. The tract at residues Pro85–Asp105 is disordered. The span at Thr93–Asp105 shows a compositional bias: acidic residues.

The protein belongs to the complex I NDUFB2 subunit family. In terms of assembly, complex I is composed of 45 different subunits.

Its subcellular location is the mitochondrion inner membrane. Its function is as follows. Accessory subunit of the mitochondrial membrane respiratory chain NADH dehydrogenase (Complex I), that is believed not to be involved in catalysis. Complex I functions in the transfer of electrons from NADH to the respiratory chain. The immediate electron acceptor for the enzyme is believed to be ubiquinone. The sequence is that of NADH dehydrogenase [ubiquinone] 1 beta subcomplex subunit 2, mitochondrial (NDUFB2) from Pan troglodytes (Chimpanzee).